Reading from the N-terminus, the 149-residue chain is Down syndrome critical region protein 9 (149 aa).

The segment at 1–41 is disordered; that stretch reads MGRICPVNSRARRLRARPGRPSGDSLPYHQLQGGAPRLWSP.

This Pan troglodytes (Chimpanzee) protein is Down syndrome critical region protein 9 (DSCR9).